We begin with the raw amino-acid sequence, 392 residues long: Ceramide synthase 5 (392 aa).

At 1–46 (MATAAQGPLSLLWGWLWSERFWLPENVSWADLEGPADGYGYPRGRH) the chain is on the lumenal side. A glycan (N-linked (GlcNAc...) asparagine) is linked at asparagine 26. Residues 47 to 67 (ILSVFPLAAGIFFVRLLFERF) form a helical membrane-spanning segment. The segment at 75-136 (CIGIEDSGPY…RHRRNQDKPP (62 aa)) is homeobox-like. The region spanning 139–340 (TKFCESMWRF…IARIALKALI (202 aa)) is the TLC domain. Helical transmembrane passes span 148 to 168 (FTFYLCIFCYGIRFLWSSPWF), 183 to 203 (LSSGLYHYYIMELAFYWSLMF), 214 to 234 (FLIMFVHHLVTIGLISFSYIN), and 272 to 292 (LFVIFSAVFMVTRLGIYPFWI). The Last loop motif motif lies at 299 to 309 (ESWEIIGPYAS). The chain crosses the membrane as a helical span at residues 311–331 (WLLNGLLLTLQLLHVIWSYLI). The Cytoplasmic portion of the chain corresponds to 332–392 (ARIALKALIR…HMGGSYWAEE (61 aa)). A disordered region spans residues 349–392 (RSDVESSSEEEDVTTCTKSPCDSSSSNGANRVNGHMGGSYWAEE). The span at 362–378 (TTCTKSPCDSSSSNGAN) shows a compositional bias: polar residues.

Interacts with PAQR4; the interaction regulates the stability and activity of CERS5 and is inhibited in presence of ceramides. Post-translationally, phosphorylated at the C-terminus by CK2.

It localises to the endoplasmic reticulum membrane. The enzyme catalyses a sphingoid base + hexadecanoyl-CoA = an N-hexadecanoyl-sphingoid base + CoA + H(+). It catalyses the reaction sphinganine + hexadecanoyl-CoA = N-hexadecanoylsphinganine + CoA + H(+). It carries out the reaction hexadecasphinganine + hexadecanoyl-CoA = N-hexadecanoylhexadecasphinganine + CoA + H(+). The catalysed reaction is sphing-4-enine + hexadecanoyl-CoA = N-hexadecanoylsphing-4-enine + CoA + H(+). The enzyme catalyses 2-hydroxyhexadecanoyl-CoA + sphinganine = N-(2-hydroxyhexadecanoyl)-sphinganine + CoA + H(+). It catalyses the reaction sphinganine + tetradecanoyl-CoA = N-(tetradecanoyl)-sphinganine + CoA + H(+). It carries out the reaction sphinganine + octadecanoyl-CoA = N-(octadecanoyl)-sphinganine + CoA + H(+). The catalysed reaction is sphinganine + (9Z)-octadecenoyl-CoA = N-(9Z-octadecenoyl)-sphinganine + CoA + H(+). The enzyme catalyses a fatty acyl-CoA + sphing-4-enine = an N-acylsphing-4-enine + CoA + H(+). Its pathway is lipid metabolism; sphingolipid metabolism. With respect to regulation, inhibited by fumonisin B1. Ceramide synthase that catalyzes the transfer of the acyl chain from acyl-CoA to a sphingoid base, with high selectivity toward palmitoyl-CoA (hexadecanoyl-CoA; C16:0-CoA). Can use other acyl donors, but with less efficiency. N-acylates sphinganine and sphingosine bases to form dihydroceramides and ceramides in de novo synthesis and salvage pathways, respectively. Plays a role in de novo ceramide synthesis and surfactant homeostasis in pulmonary epithelia. In Homo sapiens (Human), this protein is Ceramide synthase 5.